A 956-amino-acid polypeptide reads, in one-letter code: Chromatin assembly factor 1 subunit A (956 aa).

The binds to PCNA stretch occupies residues Met-1–Lys-49. Residues Met-1–Thr-314 are binds to CBX1 chromo shadow domain. 2 disordered regions span residues Val-45–Ser-65 and Asp-122–Gly-155. Residues Asp-56–Ser-65 show a composition bias toward polar residues. Ser-65, Ser-123, Ser-138, Ser-141, and Ser-143 each carry phosphoserine. Lys-182 participates in a covalent cross-link: Glycyl lysine isopeptide (Lys-Gly) (interchain with G-Cter in SUMO1); alternate. Residue Lys-182 forms a Glycyl lysine isopeptide (Lys-Gly) (interchain with G-Cter in SUMO2); alternate linkage. Positions Val-188–Gln-222 are disordered. Residues Ser-206 and Ser-224 each carry the phosphoserine modification. The PxVxL motif signature appears at Phe-233 to Leu-246. 2 disordered regions span residues Pro-250–Arg-432 and Asp-599–Gly-639. Low complexity-rich tracts occupy residues Leu-282–Pro-296 and Ser-307–Pro-317. Ser-310 is subject to Phosphoserine. Over residues Ser-329 to Arg-432 the composition is skewed to basic and acidic residues. 2 stretches are compositionally biased toward acidic residues: residues Asp-599–Gly-610 and Gly-618–Gly-633. Positions Ser-642 to Phe-678 are necessary for homodimerization and competence for chromatin assembly. Residues Arg-660 to Ser-956 form a binds to p60 region. Thr-722 bears the Phosphothreonine mark. Residues Leu-765–Ala-790 are disordered. Over residues Ser-767 to Pro-786 the composition is skewed to polar residues. Ser-772, Ser-775, and Ser-803 each carry phosphoserine. Disordered stretches follow at residues Ser-844–Ser-873 and Ser-933–Ser-956. Residues Ser-855–Pro-866 are compositionally biased toward polar residues. Phosphothreonine is present on Thr-865. 3 positions are modified to phosphoserine: Ser-868, Ser-873, and Ser-951.

The protein belongs to the CHAF1A family. As to quaternary structure, homodimer. Part of the CAF-1 complex that contains RBBP4, CHAF1B and CHAF1A. CHAF1A binds directly to CHAF1B. Only minor amounts of RBBP4 are complexed with CHAF1A and CHAF1B in G1 phase. Interacts with PCNA; the interaction is direct. Interacts (via the PxVxL motif) with CBX5; the interaction is direct. Interacts with MBD1. Interacts with histones H3.1, H3.2 and H3.1t.

Its subcellular location is the nucleus. Functionally, acts as a component of the histone chaperone complex chromatin assembly factor 1 (CAF-1), which assembles histone octamers onto DNA during replication and repair. CAF-1 performs the first step of the nucleosome assembly process, bringing newly synthesized histones H3 and H4 to replicating DNA; histones H2A/H2B can bind to this chromatin precursor subsequent to DNA replication to complete the histone octamer. It may play a role in heterochromatin maintenance in proliferating cells by bringing newly synthesized cbx proteins to heterochromatic DNA replication foci. In Homo sapiens (Human), this protein is Chromatin assembly factor 1 subunit A.